A 287-amino-acid polypeptide reads, in one-letter code: Putative sugar uptake protein EF_0928 (287 aa).

The next 10 membrane-spanning stretches (helical) occupy residues 5–27 (IALV…GGSA), 32–49 (LGMT…FFVI), 53–71 (LTTA…WSLG), 84–106 (VSVG…GAVF), 116–134 (FVVG…YLTA), 155–177 (IRAL…ATGL), 182–200 (IILP…FAFK), 207–229 (FVWM…LLTM), 234–256 (LAIS…IFLL), and 265–284 (MFYV…LLGY).

The protein belongs to the GRP transporter (TC 2.A.7.5) family.

The protein resides in the cell membrane. This chain is Putative sugar uptake protein EF_0928, found in Enterococcus faecalis (strain ATCC 700802 / V583).